The chain runs to 264 residues: S-adenosylmethionine decarboxylase proenzyme (264 aa).

Catalysis depends on serine 111, which acts as the Schiff-base intermediate with substrate; via pyruvic acid. Serine 111 carries the pyruvic acid (Ser); by autocatalysis modification. Histidine 116 acts as the Proton acceptor; for processing activity in catalysis. The active-site Proton donor; for catalytic activity is cysteine 139.

This sequence belongs to the prokaryotic AdoMetDC family. Type 2 subfamily. As to quaternary structure, heterooctamer of four alpha and four beta chains arranged as a tetramer of alpha/beta heterodimers. The cofactor is pyruvate. In terms of processing, is synthesized initially as an inactive proenzyme. Formation of the active enzyme involves a self-maturation process in which the active site pyruvoyl group is generated from an internal serine residue via an autocatalytic post-translational modification. Two non-identical subunits are generated from the proenzyme in this reaction, and the pyruvate is formed at the N-terminus of the alpha chain, which is derived from the carboxyl end of the proenzyme. The post-translation cleavage follows an unusual pathway, termed non-hydrolytic serinolysis, in which the side chain hydroxyl group of the serine supplies its oxygen atom to form the C-terminus of the beta chain, while the remainder of the serine residue undergoes an oxidative deamination to produce ammonia and the pyruvoyl group blocking the N-terminus of the alpha chain.

The enzyme catalyses S-adenosyl-L-methionine + H(+) = S-adenosyl 3-(methylsulfanyl)propylamine + CO2. It functions in the pathway amine and polyamine biosynthesis; S-adenosylmethioninamine biosynthesis; S-adenosylmethioninamine from S-adenosyl-L-methionine: step 1/1. Catalyzes the decarboxylation of S-adenosylmethionine to S-adenosylmethioninamine (dcAdoMet), the propylamine donor required for the synthesis of the polyamines spermine and spermidine from the diamine putrescine. The chain is S-adenosylmethionine decarboxylase proenzyme from Geobacillus thermodenitrificans (strain NG80-2).